A 199-amino-acid polypeptide reads, in one-letter code: Glycerol-3-phosphate acyltransferase (199 aa).

The next 5 membrane-spanning stretches (helical) occupy residues 3–23, 50–70, 78–98, 113–133, and 154–174; these read AAVWTLLLAYLFGSVPAGVLV, WGPALVVAFFDVFKGGIAVLV, DWMLGGVALMAVLGHNYSVFL, LLFLDPVLALWTFPIGLSVIL, and LALGRPLWEVATVFLMALLIF.

This sequence belongs to the PlsY family. In terms of assembly, probably interacts with PlsX.

It localises to the cell inner membrane. It carries out the reaction an acyl phosphate + sn-glycerol 3-phosphate = a 1-acyl-sn-glycero-3-phosphate + phosphate. The protein operates within lipid metabolism; phospholipid metabolism. Its function is as follows. Catalyzes the transfer of an acyl group from acyl-phosphate (acyl-PO(4)) to glycerol-3-phosphate (G3P) to form lysophosphatidic acid (LPA). This enzyme utilizes acyl-phosphate as fatty acyl donor, but not acyl-CoA or acyl-ACP. The polypeptide is Glycerol-3-phosphate acyltransferase (Thermus thermophilus (strain ATCC 27634 / DSM 579 / HB8)).